A 412-amino-acid chain; its full sequence is Poly-beta-1,6-N-acetyl-D-glucosamine synthase (412 aa).

A run of 4 helical transmembrane segments spans residues 7 to 28 (LLFYPIFMSIYWIVGSIYYFFI), 298 to 320 (IASITWVYIVLCYLSFLVITANI), 332 to 354 (IFFFSSFTMTFINIIQFTVALFI), and 364 to 386 (VGLIFLSWYPTLYWVINAAVVIM).

Belongs to the glycosyltransferase 2 family.

The protein localises to the cell membrane. N-acetylglucosaminyltransferase that catalyzes the polymerization of single monomer units of UDP-N-acetylglucosamine to produce the linear homomer poly-beta-1,6-N-acetyl-D-glucosamine (PNAG, also referred to as PIA), a biofilm adhesin polysaccharide. Requires IcaD for full activity. In Staphylococcus epidermidis (strain ATCC 35984 / DSM 28319 / BCRC 17069 / CCUG 31568 / BM 3577 / RP62A), this protein is Poly-beta-1,6-N-acetyl-D-glucosamine synthase (icaA).